The following is a 215-amino-acid chain: 3-demethoxyubiquinol 3-hydroxylase (215 aa).

The Fe cation site is built by Glu64, Glu94, His97, Glu146, Glu178, and His181.

Belongs to the COQ7 family. Fe cation is required as a cofactor.

It is found in the cell membrane. The catalysed reaction is a 5-methoxy-2-methyl-3-(all-trans-polyprenyl)benzene-1,4-diol + AH2 + O2 = a 3-demethylubiquinol + A + H2O. It participates in cofactor biosynthesis; ubiquinone biosynthesis. Catalyzes the hydroxylation of 2-nonaprenyl-3-methyl-6-methoxy-1,4-benzoquinol during ubiquinone biosynthesis. In Pseudomonas fluorescens (strain Pf0-1), this protein is 3-demethoxyubiquinol 3-hydroxylase.